The chain runs to 145 residues: UPF0310 protein PH1033 (145 aa).

Belongs to the UPF0310 family.

The chain is UPF0310 protein PH1033 from Pyrococcus horikoshii (strain ATCC 700860 / DSM 12428 / JCM 9974 / NBRC 100139 / OT-3).